The chain runs to 620 residues: Bicaudal D-related protein homolog (620 aa).

A compositionally biased stretch (low complexity) spans 23–41; the sequence is NNNNNSIVGGSSSSSSGGN. Positions 23-53 are disordered; the sequence is NNNNNSIVGGSSSSSSGGNKSKRPRQFGQYS. Coiled-coil stretches lie at residues 120-331 and 461-575; these read AAEL…LSER and VLEQ…LIDE. Basic and acidic residues-rich tracts occupy residues 493–503 and 509–528; these read KEERDQARGDL and RDEL…DRRT. Residues 493-528 form a disordered region; sequence KEERDQARGDLEDNTDRDELLSKAQTERDAANDRRT.

This sequence belongs to the BICDR family. As to quaternary structure, may homodimerize but does not interact with BicD. May interact with eEF1gamma; The interaction is probably indirect.

Functionally, functions redundantly with BicD. Involved in formation and/or development of mechanosensory organs during metamorphosis. During macrochaetae development, together with BicD, involved in Rab 6 and Spn-F stability and distribution and actin cytoskeleton organization. The protein is Bicaudal D-related protein homolog of Drosophila melanogaster (Fruit fly).